A 246-amino-acid chain; its full sequence is Flagellar brake protein YcgR (246 aa).

The PilZ domain occupies 128 to 232; sequence KRAHFRAYVG…QAERQLLQAI (105 aa).

Belongs to the YcgR family. In terms of assembly, monomer. Interacts with the flagellar basal bodies.

It is found in the bacterial flagellum basal body. Its function is as follows. Acts as a flagellar brake, regulating swimming and swarming in a bis-(3'-5') cyclic diguanylic acid (c-di-GMP)-dependent manner. Binds 1 c-di-GMP dimer per subunit. Increasing levels of c-di-GMP lead to decreased motility. The protein is Flagellar brake protein YcgR of Thioalkalivibrio sulfidiphilus (strain HL-EbGR7).